The primary structure comprises 376 residues: Pulmonary surfactant-associated protein B (376 aa).

The N-terminal stretch at 1–24 (MAKLHLQWLLLLPTLCSLGAATES) is a signal peptide. The region spanning 25–63 (ASSPDCAQGPKFWCQSLEQAIQCRALGHCLQEVWGHAGA) is the Saposin A-type domain. The propeptide occupies 25-190 (ASSPDCAQGP…PHTQDLSEQQ (166 aa)). 3 Saposin B-type domains span residues 63–145 (ANDL…PLGQ), 194–271 (PLPF…STAD), and 290–365 (QDTE…EAPA). Cystine bridges form between cysteine 67-cysteine 141, cysteine 70-cysteine 135, cysteine 98-cysteine 110, cysteine 198-cysteine 267, cysteine 201-cysteine 261, cysteine 225-cysteine 236, cysteine 294-cysteine 361, cysteine 297-cysteine 355, and cysteine 320-cysteine 330. A propeptide spanning residues 270–376 (ADAIGPALPA…PLQCFQTPHL (107 aa)) is cleaved from the precursor. Residue asparagine 306 is glycosylated (N-linked (GlcNAc...) asparagine).

Homodimer; disulfide-linked.

The protein resides in the secreted. The protein localises to the extracellular space. Its subcellular location is the surface film. Functionally, pulmonary surfactant-associated proteins promote alveolar stability by lowering the surface tension at the air-liquid interface in the peripheral air spaces. SP-B increases the collapse pressure of palmitic acid to nearly 70 millinewtons per meter. The protein is Pulmonary surfactant-associated protein B (Sftpb) of Rattus norvegicus (Rat).